The sequence spans 85 residues: Large ribosomal subunit protein eL43 (85 aa).

Positions 32, 35, 50, and 53 each coordinate Zn(2+). Residues 32–53 (CTFCGKTKMKRRAVGIWHCGSC) form a C4-type zinc finger.

Belongs to the eukaryotic ribosomal protein eL43 family. As to quaternary structure, component of the large ribosomal subunit.

It is found in the cytoplasm. Component of the large ribosomal subunit. The ribosome is a large ribonucleoprotein complex responsible for the synthesis of proteins in the cell. This Myxine glutinosa (Atlantic hagfish) protein is Large ribosomal subunit protein eL43 (rpl37a).